A 176-amino-acid chain; its full sequence is 3-hydroxyanthranilate 3,4-dioxygenase (176 aa).

Arginine 44 serves as a coordination point for O2. Fe cation contacts are provided by histidine 48, glutamate 54, and histidine 92. Glutamate 54 is a substrate binding site. Arginine 96 and glutamate 106 together coordinate substrate. Fe cation contacts are provided by cysteine 121, cysteine 124, cysteine 158, and cysteine 161.

The protein belongs to the 3-HAO family. As to quaternary structure, homodimer. Fe(2+) is required as a cofactor.

The catalysed reaction is 3-hydroxyanthranilate + O2 = (2Z,4Z)-2-amino-3-carboxymuconate 6-semialdehyde. It participates in cofactor biosynthesis; NAD(+) biosynthesis; quinolinate from L-kynurenine: step 3/3. In terms of biological role, catalyzes the oxidative ring opening of 3-hydroxyanthranilate to 2-amino-3-carboxymuconate semialdehyde, which spontaneously cyclizes to quinolinate. This Xanthomonas euvesicatoria pv. vesicatoria (strain 85-10) (Xanthomonas campestris pv. vesicatoria) protein is 3-hydroxyanthranilate 3,4-dioxygenase.